Here is a 450-residue protein sequence, read N- to C-terminus: Sensor histidine kinase EnvZ (450 aa).

Residues 1–15 lie on the Cytoplasmic side of the membrane; it reads MRRLRFSPRSSFART. Residues 16–35 form a helical membrane-spanning segment; that stretch reads LLLIVTLLFASLVTTYLVVL. Topologically, residues 36-158 are periplasmic; the sequence is NFAILPSLQQ…LTEIHQGDFS (123 aa). Positions 71–75 match the polyP-periplasmic motif motif; sequence VVPPA. A helical membrane pass occupies residues 159 to 179; sequence PLFRYTLAIMLLAIGGAWLFI. The HAMP domain occupies 180–232; that stretch reads RIQNRPLVDLEHAALQVGKGIIPPPLREYGASEVRSVTRAFNHMAAGVKQLAD. Topologically, residues 180-450 are cytoplasmic; sequence RIQNRPLVDL…TRAQGTTKEG (271 aa). The polyP-cytoplasmic motif signature appears at 201–205; that stretch reads IPPPL. Positions 223–289 are cytoplasmic dimerization domain (CDD), when dimerized forms osmosensitive core; that stretch reads MAAGVKQLAD…IIEQFIDYLR (67 aa). A Histidine kinase domain is found at 240–440; the sequence is GVSHDLRTPL…SIRAWLPVPV (201 aa). Residues H243, 347–351, D373, 392–393, and 402–406 each bind ATP; these read NAARY, RG, and TGLGL. H243 carries the post-translational modification Phosphohistidine; by autocatalysis.

As to quaternary structure, homodimer. Interacts with MzrA. Post-translationally, autophosphorylated. Incubation of isolated EnvZ C-terminal fragment (residues 180-450) with increasing levels of NaCl or sucrose increases its autophosphorylation.

It localises to the cell inner membrane. The catalysed reaction is ATP + protein L-histidine = ADP + protein N-phospho-L-histidine.. Its activity is regulated as follows. Activity is modulated by MzrA. In the presence of 0.2 M NaCl, 2.0 mM sodium cholate (bile salts) decreases expression from the ompC promoter; how this is mediated is unknown. Autophosphorylation is inhibited by the angucycline antibiotic waldiomycin in a non-competitive manner; waldiomycin prevents dimerization of the cytoplasmic domain and autophosphorylation. Functionally, member of the two-component regulatory system EnvZ/OmpR involved in osmoregulation (particularly of genes ompF and ompC) as well as other genes. EnvZ functions as a membrane-associated protein kinase that phosphorylates OmpR in response to environmental signals; at low osmolarity OmpR activates ompF transcription, while at high osmolarity it represses ompF and activates ompC transcription. Also dephosphorylates OmpR in the presence of ATP. The cytoplasmic dimerization domain (CDD) forms an osmosensitive core; increasing osmolarity stabilizes this segment (possibly by its contraction), enhancing the autophosphorylation rate and consequently, downstream phosphotransfer to OmpR and signaling. Autophosphorylation is greater when full-length EnvZ is reconstituted in a lipid environment, lipid-mediated allostery impacts the kinase function of EnvZ. Involved in acid stress response; this requires EnvZ but not OmpR phosphorylation, and suggests that EnvZ senses cytoplasmic acidic pH. The sequence is that of Sensor histidine kinase EnvZ (envZ) from Escherichia coli (strain K12).